The primary structure comprises 405 residues: MSASPIADYHAFPDAQGHFGRYGGSFVAETLVGPLQELAQAYDQARQDPAFQLAYDRDLAHYVGRPSPIYHAQRLSDHVGGAQILLKREDLNHTGAHKINNTIGQALLAARMGKKRIIAETGAGQHGVASATVAARLGLECVVYMGATDIERQKINVYRMKLLGATVVPVTSGSATLKDALNEAMRDWVTNVQDTFYIIGTVAGPDPYPRMVRDFNAIVGREAREQMLAEYGRLPDAITACVGGGSNAIGLFHAFLNDRQVEIVGAEAAGDGINTGRHAASIAAGRPGVLHGNRTYVLCDDDGQIIETHSVSAGLDYPGVGPEHAFLADTGRARYLGITDEEALQAFHLLAHTEGILPALESSHALAQAIKLARERPRDQIVLCNLSGRGDKDVHTIAAREGLVL.

The residue at position 98 (Lys98) is an N6-(pyridoxal phosphate)lysine.

It belongs to the TrpB family. As to quaternary structure, tetramer of two alpha and two beta chains. The cofactor is pyridoxal 5'-phosphate.

The enzyme catalyses (1S,2R)-1-C-(indol-3-yl)glycerol 3-phosphate + L-serine = D-glyceraldehyde 3-phosphate + L-tryptophan + H2O. It participates in amino-acid biosynthesis; L-tryptophan biosynthesis; L-tryptophan from chorismate: step 5/5. Its function is as follows. The beta subunit is responsible for the synthesis of L-tryptophan from indole and L-serine. The chain is Tryptophan synthase beta chain from Stenotrophomonas maltophilia (strain K279a).